Consider the following 203-residue polypeptide: TATA-binding protein 2 (203 aa).

2 repeat units span residues 28–104 (LQNI…ARII) and 118–195 (IQNI…YPVL).

This sequence belongs to the TBP family. Belongs to the TFIID complex together with the TBP-associated factors (TAFs). Binds DNA as monomer. Interacts with RF2A and TFIIB. Interacts with CWZF7.

Its subcellular location is the nucleus. General transcription factor that functions at the core of the DNA-binding multiprotein factor TFIID. Binding of TFIID to the TATA box is the initial transcriptional step of the pre-initiation complex (PIC), playing a role in the activation of eukaryotic genes transcribed by RNA polymerase II. The polypeptide is TATA-binding protein 2 (TBP2) (Oryza sativa subsp. japonica (Rice)).